Reading from the N-terminus, the 296-residue chain is Cbb3-type cytochrome c oxidase subunit CcoP (296 aa).

At 1–31 (MAQNYKDELSGVETTGHEWDGLRELNNPLPK) the chain is on the cytoplasmic side. Residues 32-52 (WWLYLFYVCIAWAMVYYVFYP) form a helical membrane-spanning segment. The Periplasmic portion of the chain corresponds to 53–296 (AWPLGKTYTK…VYVHNLGGGK (244 aa)). Cytochrome c domains follow at residues 108–200 (FAMA…LSLN) and 207–293 (GKVA…HNLG). The heme c site is built by C121, C124, H125, M175, C220, C223, H224, and M270.

It belongs to the CcoP / FixP family. As to quaternary structure, component of the cbb3-type cytochrome c oxidase at least composed of CcoN, CcoO, CcoQ and CcoP. Heme c is required as a cofactor.

It localises to the cell inner membrane. The protein operates within energy metabolism; oxidative phosphorylation. Functionally, C-type cytochrome. Part of the cbb3-type cytochrome c oxidase complex. CcoP subunit is required for transferring electrons from donor cytochrome c via its heme groups to CcoO subunit. From there, electrons are shuttled to the catalytic binuclear center of CcoN subunit where oxygen reduction takes place. The complex also functions as a proton pump. In Azospirillum sp. (strain B510), this protein is Cbb3-type cytochrome c oxidase subunit CcoP.